A 1164-amino-acid chain; its full sequence is Toxin subunit YenA1 (1164 aa).

The disordered stretch occupies residues 106-131; the sequence is RLEKSNSPLVPQTSSSTDASSESQTN. Positions 118–130 are enriched in low complexity; it reads TSSSTDASSESQT.

Semipurified toxin complex consists of at least YenA1, YenA2, YenB, YenC1, YenC2, Chi1 and Chi2. The Yen-TC:K9 subcomplex is about 26 nm tall and 22 nm in diameter with 5-fold symmetry and 5 copies of YenA1, YenA2, Chi1 and Chi2; the chitinase subunits may be solvent accessible on the exterior the complex. The Yen-TC:K9 subcomplex has no insecticidal activity. The native complex with additional YenB, YenC1 and YenC2 subunits is 16 nm taller and is insecticidal; the toxicity-conferring subunits are present at about 1 copy each.

The protein localises to the secreted. Toxin complex is secreted when grown at 25 degrees Celsius or less; at higher temperatures the proteins are present intracellularly but not secreted. In terms of biological role, part of an orally active toxin complex (TC) with strong insecticidal effects on larvae of the Coleoptera Costelytra zealandica, Acrossidius tasmania and Adoryphorus couloni and some Lepidoptera larvae. The TC has an endochitinase activity. The polypeptide is Toxin subunit YenA1 (Yersinia entomophaga).